A 330-amino-acid chain; its full sequence is Inactive serine protease 45 (330 aa).

The first 35 residues, 1–35 (MATSLRLLDAGPGSLRRWIPTCFAALLLLPPRPNL), serve as a signal peptide directing secretion. The 247-residue stretch at 45-291 (VCGAPWWSDS…YTGWIKEQVS (247 aa)) folds into the Peptidase S1 domain. 4 disulfides stabilise this stretch: Cys75–Cys91, Cys172–Cys249, Cys207–Cys230, and Cys239–Cys267. A glycan (N-linked (GlcNAc...) asparagine) is linked at Asn272.

The protein belongs to the peptidase S1 family.

It localises to the secreted. The sequence is that of Inactive serine protease 45 (Prss45) from Rattus norvegicus (Rat).